The primary structure comprises 225 residues: Transcription factor MYB1 (225 aa).

HTH myb-type domains lie at 11 to 67 (LGRV…KPSI) and 68 to 118 (KRGH…YKKH). DNA-binding regions (H-T-H motif) lie at residues 39 to 63 (WKRV…LNYL) and 91 to 114 (WSLI…NTHL).

In terms of assembly, no interactions with bHLH.

It is found in the nucleus. In terms of biological role, activates DODA1 and CYP76AD1 in the betalain red pigment pathway. This Beta vulgaris (Sugar beet) protein is Transcription factor MYB1.